Here is a 149-residue protein sequence, read N- to C-terminus: 2S seed storage albumin protein (149 aa).

Residues M1–L22 form the signal peptide. 4 disulfide bridges follow: C38/C98, C52/C87, C88/C133, and C100/C140. 4 no IgE-binding regions span residues Q41 to N53, A68 to E81, L84 to E95, and E97 to M105. An igE-binding region spans residues E108–T117. The no IgE-binding stretch occupies residues K121 to N131. The interval K132 to H141 is igE-binding.

The protein belongs to the 2S seed storage albumins family. As to expression, expressed in seeds (at protein level). Expressed in seeds.

Its function is as follows. Seed storage protein. The protein is 2S seed storage albumin protein of Fagopyrum tataricum (Tartarian buckwheat).